Consider the following 221-residue polypeptide: uncharacterized protein (221 aa).

The H-T-H motif DNA-binding region spans 77-96 (YRERAVELGVPERAILVEPN).

The protein to E.coli YdcF.

The imp locus inhibits the extrachromosomal maintenance of the streptomyces plasmid SLP1. May function as a transcriptional activator. This is an uncharacterized protein from Streptomyces coelicolor (strain ATCC BAA-471 / A3(2) / M145).